We begin with the raw amino-acid sequence, 110 residues long: Coiled-coil-helix-coiled-coil-helix domain-containing protein 5 (110 aa).

N-acetylmethionine is present on methionine 1. 2 CHCH domains span residues 9–52 (ARYC…PIIR) and 55–97 (RQAC…QPPR). 4 consecutive short sequence motifs (cx9C motif) follow at residues 12 to 22 (CGRELEQYGQC), 34 to 44 (CHYLKMSIAQC), 58 to 68 (CAQPFEAFEEC), and 79 to 89 (CAEHMRRFLQC). Cystine bridges form between cysteine 12–cysteine 44, cysteine 22–cysteine 34, cysteine 58–cysteine 89, and cysteine 68–cysteine 79.

In terms of assembly, monomer.

The protein localises to the mitochondrion intermembrane space. This Homo sapiens (Human) protein is Coiled-coil-helix-coiled-coil-helix domain-containing protein 5 (CHCHD5).